Reading from the N-terminus, the 189-residue chain is Peptidyl-tRNA hydrolase (189 aa).

Tyr-15 provides a ligand contact to tRNA. Residue His-20 is the Proton acceptor of the active site. Positions 66, 68, and 114 each coordinate tRNA.

This sequence belongs to the PTH family. In terms of assembly, monomer.

Its subcellular location is the cytoplasm. It catalyses the reaction an N-acyl-L-alpha-aminoacyl-tRNA + H2O = an N-acyl-L-amino acid + a tRNA + H(+). Functionally, hydrolyzes ribosome-free peptidyl-tRNAs (with 1 or more amino acids incorporated), which drop off the ribosome during protein synthesis, or as a result of ribosome stalling. In terms of biological role, catalyzes the release of premature peptidyl moieties from peptidyl-tRNA molecules trapped in stalled 50S ribosomal subunits, and thus maintains levels of free tRNAs and 50S ribosomes. The sequence is that of Peptidyl-tRNA hydrolase from Streptococcus sanguinis (strain SK36).